Reading from the N-terminus, the 473-residue chain is GTPase Der (473 aa).

EngA-type G domains are found at residues 5 to 170 (PVVA…PEDV) and 178 to 351 (LKLA…ASSM). Residues 11–18 (GRPNVGKS), 58–62 (DTGGI), 123–126 (NKID), 184–191 (GRPNVGKS), 231–235 (DTAGV), and 296–299 (NKWD) each bind GTP. In terms of domain architecture, KH-like spans 352 to 436 (FKVSTNRLTQ…PLKVEFKLNT (85 aa)). The tract at residues 438-473 (PYAGKKTTSSKKLRPGVSEARQKRRNMKYKKGSHKK) is disordered. Residues 459-473 (QKRRNMKYKKGSHKK) are compositionally biased toward basic residues.

It belongs to the TRAFAC class TrmE-Era-EngA-EngB-Septin-like GTPase superfamily. EngA (Der) GTPase family. In terms of assembly, associates with the 50S ribosomal subunit.

Functionally, GTPase that plays an essential role in the late steps of ribosome biogenesis. This is GTPase Der from Psychrobacter sp. (strain PRwf-1).